Here is a 297-residue protein sequence, read N- to C-terminus: Probable endonuclease 4 (297 aa).

The Zn(2+) site is built by His-69, His-110, Glu-145, Asp-179, His-182, His-214, Asp-227, His-229, and Glu-259.

The protein belongs to the AP endonuclease 2 family. Zn(2+) serves as cofactor.

It catalyses the reaction Endonucleolytic cleavage to 5'-phosphooligonucleotide end-products.. Its function is as follows. Endonuclease IV plays a role in DNA repair. It cleaves phosphodiester bonds at apurinic or apyrimidinic (AP) sites, generating a 3'-hydroxyl group and a 5'-terminal sugar phosphate. The polypeptide is Probable endonuclease 4 (Listeria monocytogenes serotype 4b (strain F2365)).